We begin with the raw amino-acid sequence, 597 residues long: Arginine--tRNA ligase (597 aa).

The 'HIGH' region motif lies at 125–135 (PNTNKPLHLGH).

The protein belongs to the class-I aminoacyl-tRNA synthetase family. Monomer.

The protein localises to the cytoplasm. The enzyme catalyses tRNA(Arg) + L-arginine + ATP = L-arginyl-tRNA(Arg) + AMP + diphosphate. This Bacteroides fragilis (strain YCH46) protein is Arginine--tRNA ligase.